The primary structure comprises 258 residues: Granzyme M (258 aa).

The Peptidase S1 domain occupies 21 to 250 (IIGGREAVPH…YSSWIRKVIG (230 aa)). The cysteines at positions 46 and 62 are disulfide-linked. Residues His61 and Asp107 each act as charge relay system in the active site. The disordered stretch occupies residues 122–141 (NVKPLALPRKPRDKPAEGSR). Intrachain disulfides connect Cys142–Cys210, Cys173–Cys189, and Cys200–Cys226. N-linked (GlcNAc...) asparagine glycosylation is present at Asn174. Ser204 serves as the catalytic Charge relay system. N-linked (GlcNAc...) asparagine glycosylation is present at Asn225.

It belongs to the peptidase S1 family. Granzyme subfamily.

The protein localises to the secreted. It localises to the cytoplasmic granule. In terms of biological role, cleaves peptide substrates after methionine, leucine, and norleucine. Physiological substrates include EZR, alpha-tubulins and the apoptosis inhibitor BIRC5/Survivin. Promotes caspase activation and subsequent apoptosis of target cells. The chain is Granzyme M (Gzmm) from Rattus norvegicus (Rat).